Consider the following 236-residue polypeptide: 2,3,4,5-tetrahydropyridine-2,6-dicarboxylate N-acetyltransferase (236 aa).

The protein belongs to the transferase hexapeptide repeat family. DapH subfamily.

The catalysed reaction is (S)-2,3,4,5-tetrahydrodipicolinate + acetyl-CoA + H2O = L-2-acetamido-6-oxoheptanedioate + CoA. It participates in amino-acid biosynthesis; L-lysine biosynthesis via DAP pathway; LL-2,6-diaminopimelate from (S)-tetrahydrodipicolinate (acetylase route): step 1/3. Its function is as follows. Catalyzes the transfer of an acetyl group from acetyl-CoA to tetrahydrodipicolinate. This is 2,3,4,5-tetrahydropyridine-2,6-dicarboxylate N-acetyltransferase from Pediococcus pentosaceus (strain ATCC 25745 / CCUG 21536 / LMG 10740 / 183-1w).